Reading from the N-terminus, the 351-residue chain is Phosphoribosylformylglycinamidine cyclo-ligase (351 aa).

Belongs to the AIR synthase family.

It is found in the cytoplasm. The enzyme catalyses 2-formamido-N(1)-(5-O-phospho-beta-D-ribosyl)acetamidine + ATP = 5-amino-1-(5-phospho-beta-D-ribosyl)imidazole + ADP + phosphate + H(+). The protein operates within purine metabolism; IMP biosynthesis via de novo pathway; 5-amino-1-(5-phospho-D-ribosyl)imidazole from N(2)-formyl-N(1)-(5-phospho-D-ribosyl)glycinamide: step 2/2. The sequence is that of Phosphoribosylformylglycinamidine cyclo-ligase from Burkholderia multivorans (strain ATCC 17616 / 249).